A 572-amino-acid polypeptide reads, in one-letter code: Methionine--tRNA ligase (572 aa).

The short motif at 11–21 (PYINGIKHLGN) is the 'HIGH' region element. Zn(2+) is bound by residues Cys-143, Cys-146, Cys-156, and Cys-159. The 'KMSKS' region signature appears at 346–350 (QFSTS). ATP is bound at residue Thr-349.

The protein belongs to the class-I aminoacyl-tRNA synthetase family. MetG type 1 subfamily. In terms of assembly, monomer. Zn(2+) serves as cofactor.

It localises to the cytoplasm. The catalysed reaction is tRNA(Met) + L-methionine + ATP = L-methionyl-tRNA(Met) + AMP + diphosphate. In terms of biological role, is required not only for elongation of protein synthesis but also for the initiation of all mRNA translation through initiator tRNA(fMet) aminoacylation. This chain is Methionine--tRNA ligase, found in Ruegeria pomeroyi (strain ATCC 700808 / DSM 15171 / DSS-3) (Silicibacter pomeroyi).